We begin with the raw amino-acid sequence, 2313 residues long: Protein Ycf2 (2313 aa).

Residue 1606 to 1613 (GSMETGRS) coordinates ATP.

This sequence belongs to the Ycf2 family.

Its subcellular location is the plastid. It localises to the chloroplast stroma. In terms of biological role, probable ATPase of unknown function. Its presence in a non-photosynthetic plant (Epifagus virginiana) and experiments in tobacco indicate that it has an essential function which is probably not related to photosynthesis. The polypeptide is Protein Ycf2 (Psilotum nudum (Whisk fern)).